Reading from the N-terminus, the 259-residue chain is Anti-Pycsar protein Apyc1 (259 aa).

Residues 21–233 form a beta-lactamase-like region; the sequence is YNNSALVTFT…KQQNKIFLMH (213 aa). Residues histidine 64, histidine 66, aspartate 68, histidine 69, histidine 154, aspartate 178, and histidine 233 each coordinate Zn(2+).

Belongs to the anti-Pycsar protein Apyc1 family. Homodimer. Requires Zn(2+) as cofactor.

It catalyses the reaction 3',5'-cyclic CMP + H2O = CMP + H(+). It carries out the reaction 3',5'-cyclic UMP + H2O = UMP + H(+). Functionally, counteracts the host Pycsar antiviral defense system. Phosphodiesterase that enables metal-dependent hydrolysis of host cyclic nucleotide Pycsar defense signals such as cCMP and cUMP. In Bacillus phage vB_BveM-Goe7, this protein is Anti-Pycsar protein Apyc1.